Consider the following 106-residue polypeptide: Iron-sulfur cluster assembly protein CyaY (106 aa).

The protein belongs to the frataxin family.

Involved in iron-sulfur (Fe-S) cluster assembly. May act as a regulator of Fe-S biogenesis. In Salmonella dublin (strain CT_02021853), this protein is Iron-sulfur cluster assembly protein CyaY.